A 583-amino-acid chain; its full sequence is Glycine--tRNA ligase (583 aa).

Positions 100 and 166 each coordinate substrate. ATP is bound by residues Arg-198–Glu-200, Val-208–Phe-213, Glu-328–Val-329, and Gly-443–Arg-446. Substrate is bound at residue Phe-213 to Glu-217. Glu-439–Gly-443 contributes to the substrate binding site.

Belongs to the class-II aminoacyl-tRNA synthetase family.

Its subcellular location is the cytoplasm. The catalysed reaction is tRNA(Gly) + glycine + ATP = glycyl-tRNA(Gly) + AMP + diphosphate. Functionally, catalyzes the attachment of glycine to tRNA(Gly). The sequence is that of Glycine--tRNA ligase from Aeropyrum pernix (strain ATCC 700893 / DSM 11879 / JCM 9820 / NBRC 100138 / K1).